Consider the following 51-residue polypeptide: Light-harvesting protein B-800/850 beta chain (51 aa).

Topologically, residues 2–23 (ADDANKVWPSGLTTAEAEELQK) are cytoplasmic. Residues 24 to 46 (GLVDGTRVFGVIAVLAHILAYAY) form a helical membrane-spanning segment. An a bacteriochlorophyll-binding site is contributed by His40. At 47–51 (TPWLH) the chain is on the periplasmic side.

It belongs to the antenna complex beta subunit family. An alpha/beta heterodimer conjugated to 3 bacteriochlorophyll molecules. The core complex is formed by different alpha and beta chains, binding bacteriochlorophyll molecules, and arranged most probably in tetrameric structures disposed around the reaction center. The non-pigmented gamma chains may constitute additional components.

The protein localises to the cell inner membrane. In terms of biological role, antenna complexes are light-harvesting systems, which transfer the excitation energy to the reaction centers. The sequence is that of Light-harvesting protein B-800/850 beta chain (pucB) from Rubrivivax gelatinosus (Rhodocyclus gelatinosus).